The following is a 339-amino-acid chain: Dihydroorotate dehydrogenase (quinone) (339 aa).

Residues Ala-61–Lys-65 and Thr-85 contribute to the FMN site. Lys-65 is a substrate binding site. Asn-110–Phe-114 is a binding site for substrate. 2 residues coordinate FMN: Asn-138 and Asn-171. Substrate is bound at residue Asn-171. Ser-174 acts as the Nucleophile in catalysis. Asn-176 lines the substrate pocket. Positions 216 and 244 each coordinate FMN. Substrate is bound at residue Asn-245–Thr-246. Residues Gly-267, Gly-296, and Tyr-317–Ser-318 contribute to the FMN site.

The protein belongs to the dihydroorotate dehydrogenase family. Type 2 subfamily. Monomer. FMN serves as cofactor.

It is found in the cell membrane. It carries out the reaction (S)-dihydroorotate + a quinone = orotate + a quinol. The protein operates within pyrimidine metabolism; UMP biosynthesis via de novo pathway; orotate from (S)-dihydroorotate (quinone route): step 1/1. Its function is as follows. Catalyzes the conversion of dihydroorotate to orotate with quinone as electron acceptor. This Pseudomonas fluorescens (strain Pf0-1) protein is Dihydroorotate dehydrogenase (quinone).